A 393-amino-acid chain; its full sequence is MNDVFLKALPVLQKLTTAGFEAYFVGGSVRDYLLNRTISDVDIATSAFPEEVKEIFQTSYDTGIAHGTVTVRENNEFYEVTTFRTEGTYEDFRRPSEVTFIRSLEEDLKRRDFTMNAIAMDEHFALHDPFSGQLAIQNKEIKAVGKASERFHEDALRMMRAVRFLSQLDFELDKETEKALESQIELLQHTSVERMTVEWIKMMKGKAAKRAIELLLKVKMETYLPGLKDEKPALSEFASWDWEKRTTEESIWLGLVVAVKPNNVNAFLKAWKLPNKTIQLVNKAYQDALKMKETWLTDELYHAGKAVFSLVNELNVIRGQENNQHKLSQAYEALPIHSKKDLAITGADLLKWSGESAGPWVKETLDKVECGVLSNEINNEKIQIKRWLGYHEE.

Residues Gly-27 and Arg-30 each contribute to the ATP site. CTP contacts are provided by Gly-27 and Arg-30. The Mg(2+) site is built by Asp-40 and Asp-42. ATP contacts are provided by Arg-111, Asp-154, Arg-157, Arg-160, and Arg-163. 5 residues coordinate CTP: Arg-111, Asp-154, Arg-157, Arg-160, and Arg-163.

Belongs to the tRNA nucleotidyltransferase/poly(A) polymerase family. Bacterial CCA-adding enzyme type 3 subfamily. As to quaternary structure, homodimer. Requires Mg(2+) as cofactor.

It catalyses the reaction a tRNA precursor + 2 CTP + ATP = a tRNA with a 3' CCA end + 3 diphosphate. It carries out the reaction a tRNA with a 3' CCA end + 2 CTP + ATP = a tRNA with a 3' CCACCA end + 3 diphosphate. Its function is as follows. Catalyzes the addition and repair of the essential 3'-terminal CCA sequence in tRNAs without using a nucleic acid template. Adds these three nucleotides in the order of C, C, and A to the tRNA nucleotide-73, using CTP and ATP as substrates and producing inorganic pyrophosphate. tRNA 3'-terminal CCA addition is required both for tRNA processing and repair. Also involved in tRNA surveillance by mediating tandem CCA addition to generate a CCACCA at the 3' terminus of unstable tRNAs. While stable tRNAs receive only 3'-terminal CCA, unstable tRNAs are marked with CCACCA and rapidly degraded. The sequence is that of CCA-adding enzyme from Listeria monocytogenes serotype 4a (strain HCC23).